Here is a 123-residue protein sequence, read N- to C-terminus: Small ribosomal subunit protein uS12 (123 aa).

A disordered region spans residues 1–45 (MPTINQLIRKKRQSGATRKKSPALQKSPQKRGVCLQVKTKTPKKP). Positions 8–21 (IRKKRQSGATRKKS) are enriched in basic residues.

It belongs to the universal ribosomal protein uS12 family. In terms of assembly, part of the 30S ribosomal subunit. Contacts proteins S8 and S17. May interact with IF1 in the 30S initiation complex.

Functionally, with S4 and S5 plays an important role in translational accuracy. In terms of biological role, interacts with and stabilizes bases of the 16S rRNA that are involved in tRNA selection in the A site and with the mRNA backbone. Located at the interface of the 30S and 50S subunits, it traverses the body of the 30S subunit contacting proteins on the other side and probably holding the rRNA structure together. The combined cluster of proteins S8, S12 and S17 appears to hold together the shoulder and platform of the 30S subunit. The protein is Small ribosomal subunit protein uS12 of Chlamydia muridarum (strain MoPn / Nigg).